The following is a 260-amino-acid chain: Putative ATP-binding protein BruAb2_1123 (260 aa).

The region spanning 5–228 is the ABC transporter domain; it reads ISFNNVVMRY…DLPYPRTEAI (224 aa). 37-44 is a binding site for ATP; it reads GPSGCGKS.

Belongs to the ABC transporter superfamily. As to quaternary structure, the complex is composed of two ATP-binding proteins (BruAb2_1123), two transmembrane proteins (BruAb2_1124) and a solute-binding protein (BruAb2_1122).

It is found in the cell inner membrane. Its function is as follows. Probably part of an ABC transporter complex. Probably Responsible for energy coupling to the transport system. The protein is Putative ATP-binding protein BruAb2_1123 of Brucella abortus biovar 1 (strain 9-941).